The sequence spans 129 residues: MKYFVVALALVAAFACIAESKPAESEHELAEVEEENELADLEDAVWLEHLADLSDLEEARGFFGNTWKKIKGKADKIMLKKAVKLMVKKEGISKEEAQAKVDAMSKKQIRLYLLKYYGKKALQKASEKL.

Positions 1-20 are cleaved as a signal peptide; that stretch reads MKYFVVALALVAAFACIAES. The propeptide occupies 21-60; sequence KPAESEHELAEVEEENELADLEDAVWLEHLADLSDLEEAR. The short motif at 57 to 60 is the Processing quadruplet motif element; the sequence is EEAR.

Post-translationally, cleavage of the propeptide depends on the processing quadruplet motif (XXXR, with at least one of X being E). In terms of tissue distribution, expressed by the venom gland.

The protein localises to the secreted. Functionally, insecticidal, cytolytic and antimicrobial peptide. Forms voltage-dependent, ion-permeable channels in membranes. At high concentration causes cell membrane lysis. The chain is M-zodatoxin-Lt8b (cit 1-2) from Lachesana tarabaevi (Spider).